The chain runs to 1776 residues: MAAAPSELLPLPPPATPGSYRLLSRCRPYAPGTDGRRSGGTMRGEKNYYCRGAAGDHGSCPATPSPLASTLLLPAEAVSTSWSGPGSGLSGGDEEETRLLQLLRTAPDPSEAFQALQAALPRRGGRLGFPRRKEALYRALGRVLVEGGSEEKRLCLQLLSDVLRGQGEAGQLEEAFSLALLPQLVVSLREDNPALRKDALQILHICLRRSSGQVLRTLIQGLESPDARLRASTALLLPILFTPEDLLQGLDLTEVIISLARKLGDQEMEEESETAFSSLQQIGERLGQERFHSYISRLPSALRRHYNRRLESQYGSQVPYYLELEASGFSEDAAPCVVNLSSSNLKFEIIPQELHARLLDQEDYKNRTQAVEELKQLLGKFNPSSTPHASLVGFISLLYNLLDDSNFKVVHGTLQVLHLLVIRLGEQVQQFLGPVIAASVKVLADNKLVIKQEYMKIFLKLMKEVGPQRVLSLLLENLKHKHSRVREEVVNICICSLLTYPSEDFDLPKLSFDLAPALVDSKRRVRQAALEAFAVLASSMGSGKTNVLFKAVDTVELQDNGDGVMNAVQARLARKTLPRLTEQGFVEYAILMPSSAQGRSSHLAHGADTDWLMSGNRTQSAHCYCGDHTRDSMQLYGSYSPTICTRRVLSAGKGKNKLPWENEQPGVMGENQTSNSKDIKDTEQFSAHDLIPSPKLKPSQGMPASDDLCFSKKRSSRNLFQSSRDFNSESVPTCGAGNTADLQTNLPGKCGQLGLSQIGCRTGSVGSDLQFLGTANGHQDKVYASIDFGSKTQQTFGSQSERTSSYSGSNASPGSFILPSYPLASPRTSPKHTSPLSVAPKKSQDNSISFSNSWPLKSFEGLSKPSPQKKLANQKSSDPTGENFQEKTTAVQLTPALVRSPSSRRGLNGTKPVPPIPRGINLLPDKADLSTMGHMKKQPDDIWKSEKDNLTIDLSELNFRDKDLDQEEMHSSLRSLRNSAAKKRAKLSGSSSTSDVDSPDSAMKLELTIDSPSRASSPNISSYSESGVYSQESLTSSLSTTPQGKRIMSDIFPTFGSKPCSTRLSSAKKTSHAAEQSPSAGFTRSSNLQQISSFDFTSTNTLSEDSVVIVGKGVFGNPNSAPTTCSQPVISSVESEDTFPVKPSIEPPSGVYGRAVQHNAPLYPEVENDKDTKVSIAKSTYEKMRQKRKEEKELLDAKDCERKETNPWERIKHLGSEKMTSENEPSSGVIPQYKERMSSVTHSPEIMDSLELRPFSKPDIALTEALRLLADEDWEKKMEGLNFVRCLAAFHSDLLNTKLHETTFAVVQEVKNLRSGVSRAAVVCLGDLFTYLKKSMDQELDSAVRALLHKAGESNTFIREDVDKALKAMVNNVTPARAVTSLINGGQSHLHIAVRRCTAQHLADVVECMDPERISSGTKDMADRLLPAAAKFAQDSSQETRYYGRKMLFLMMGHPNFEKLLEKYIPSKDLPYIKESVKNLRLKGLGEIPLDTASAKGRRSHPGSVGNTRSSSVSRDAFSSSEREVTEVREVPRKSAPRNSLESAEYIKVITGLLNAKDFRDRINGIKQLLSDTENNQELVVGNIVKIFDAFKSRLHDSNSKVNLVALETMHKMIPLLRDNLSPIINMLIPAIVDNNLNSKNPGIYAAATNVVHALSQHVDNYLLLQPFCTKAQFLNGKAKQDMTEKLADIVTELYQRKPHATEQKVLVVLWHLLGNMTHSGSLPGAGGNIRTATAKLSKALFTQMGQNLLNQAASQPPHIKKSLEELLDVTVLSEL.

2 TOG regions span residues 94–311 and 351–595; these read EEET…RRLE and PQEL…MPSS. HEAT repeat units follow at residues 175 to 212, 214 to 246, 250 to 288, 344 to 383, 389 to 426, 430 to 465, 466 to 503, and 505 to 542; these read AFSL…RSSG, VLRT…PEDL, LDLT…RLGQ, NLKF…KFNP, ASLV…RLGE, QFLG…MKEV, GPQR…YPSE, and FDLP…SMGS. Disordered stretches follow at residues 655-676, 817-921, 970-1000, and 1062-1084; these read KNKL…TSNS, ILPS…RGIN, HSSL…DSPD, and TRLS…GFTR. Composition is skewed to polar residues over residues 826-836, 845-855, and 871-892; these read PRTSPKHTSPL, DNSISFSNSWP, and LANQ…TAVQ. A compositionally biased stretch (low complexity) spans 988-1000; it reads SGSSSTSDVDSPD. The tract at residues 1259 to 1481 is TOG 3; sequence DIALTEALRL…YIKESVKNLR (223 aa). HEAT repeat units follow at residues 1297–1334 and 1338–1375; these read TKLH…YLKK and QELD…NVTP. The interval 1493-1536 is disordered; the sequence is ASAKGRRSHPGSVGNTRSSSVSRDAFSSSEREVTEVREVPRKSA. The segment covering 1509 to 1520 has biased composition (low complexity); the sequence is RSSSVSRDAFSS. Over residues 1521–1533 the composition is skewed to basic and acidic residues; the sequence is SEREVTEVREVPR. A TOG 4 region spans residues 1540–1776; sequence SLESAEYIKV…LLDVTVLSEL (237 aa). HEAT repeat units follow at residues 1541–1578, 1582–1619, and 1623–1661; these read LESA…NNQE, GNIV…LLRD, and PIIN…HVDN.

This sequence belongs to the Crescerin family. In terms of assembly, interacts with ARMC9. Interacts with CCDC66, CEP104 and CSPP1.

It is found in the cell projection. It localises to the cilium. The protein resides in the cytoplasm. Its subcellular location is the cytoskeleton. The protein localises to the cilium axoneme. Its function is as follows. Involved in ciliogenesis. It is required for appropriate acetylation and polyglutamylation of ciliary microtubules, and regulation of cilium length. Interacts with microtubules and promotes microtubule polymerization via its HEAT repeat domains, especially those in TOG region 2 and 4. This is TOG array regulator of axonemal microtubules protein 1 (Togaram1) from Mus musculus (Mouse).